Consider the following 795-residue polypeptide: Forkhead box protein P4 (795 aa).

Residues 1–25 (MMVESASETIRSAPSGQNGVGSLSA) are compositionally biased toward polar residues. The disordered stretch occupies residues 1–62 (MMVESASETI…SGGADSNGEM (62 aa)). Over residues 36–45 (AGTAPAAGRD) the composition is skewed to low complexity. Phosphoserine is present on residues Ser58 and Ser92. Lys181 participates in a covalent cross-link: Glycyl lysine isopeptide (Lys-Gly) (interchain with G-Cter in SUMO2). Disordered stretches follow at residues 233–252 (PQLWKGEGAPGQPAEDSGRQ) and 265–310 (TSFA…PLYG). The segment covering 292 to 303 (SRRDSSSHEETP) has biased composition (basic and acidic residues). Residues 312 to 337 (GECKWPGCETLCEDLGQFIKHLNTEH) form a C2H2-type zinc finger. Residues 354–375 (VQQLEIQLAKESERLQAMMAHL) form a leucine-zipper region. The interval 379–437 (PSEPKPFSQPVTVSADPFPDGLVHPPTSAAAPVTPLRPPGLGSASLHSGGPARRRSNDK) is disordered. A Glycyl lysine isopeptide (Lys-Gly) (interchain with G-Cter in SUMO2) cross-link involves residue Lys383. Positions 459–549 (RPPFTYASLI…PPKMTGSPTL (91 aa)) form a DNA-binding region, fork-head. Phosphoserine is present on Ser546. The disordered stretch occupies residues 589–671 (ASSLLPLSQE…LEEDLGGEDM (83 aa)). The segment covering 609 to 627 (SNGSSSPPRLSPPQYSHQI) has biased composition (polar residues). Residues 628–642 (QVKEEPAEAEEDRRP) are compositionally biased toward basic and acidic residues.

As to quaternary structure, forms homodimers and heterodimers with FOXP1 and FOXP2. Dimerization is required for DNA-binding. In terms of tissue distribution, expressed in the adult heart, brain, spleen lung, liver, kidney and testes.

It is found in the nucleus. In terms of biological role, transcriptional repressor that represses lung-specific expression. The chain is Forkhead box protein P4 from Mus musculus (Mouse).